The sequence spans 1166 residues: UDP-N-acetylglucosamine transferase subunit ALG13 (1166 aa).

The tract at residues 1-125 (MKRAFVTVGT…LHKEGHLFYC (125 aa)) is glycosyltransferase activity. The tract at residues 126-394 (TCRVLSCPAP…GSRRNKHHAL (269 aa)) is deubiquitinase activity. The region spanning 225 to 346 (LFRKVVAKDA…NGHYDSVYSK (122 aa)) is the OTU domain. The active-site For deubiquitinase activity is the aspartate 233. The Nucleophile; for deubiquitinase activity role is filled by cysteine 236. Residue histidine 339 is the For deubiquitinase activity of the active site. A disordered region spans residues 393–438 (ALTASVEGSSDQKSSTEDRTEEAAACSSAASTPEGNKQGTERQKVP). A Tudor domain is found at 486-546 (YYFLGDKCQV…RPVNQVALLP (61 aa)). 3 stretches are compositionally biased toward pro residues: residues 921-930 (PPPLPPPPPA), 941-957 (PLPP…PPYS), and 1004-1034 (QPQP…PPPQ). 2 disordered regions span residues 921–966 (PPPL…SDLP) and 998–1056 (QQQL…EQPL).

It belongs to the glycosyltransferase 28 family. Forms with ALG14 the active heterodimeric UDP-N-acetylglucosamine transferase complex. As to quaternary structure, not able to interact with ALG14 to form an active UDP-N-acetylglucosamine transferase complex.

The protein resides in the endoplasmic reticulum membrane. It catalyses the reaction an N-acetyl-alpha-D-glucosaminyl-diphospho-di-trans,poly-cis-dolichol + UDP-N-acetyl-alpha-D-glucosamine = an N,N'-diacetylchitobiosyl-diphospho-di-trans,poly-cis-dolichol + UDP + H(+). It functions in the pathway protein modification; protein glycosylation. Catalytic subunit of the UDP-N-acetylglucosamine transferase complex that operates in the biosynthetic pathway of dolichol-linked oligosaccharides, the glycan precursors employed in protein asparagine (N)-glycosylation. The assembly of dolichol-linked oligosaccharides begins on the cytosolic side of the endoplasmic reticulum membrane and finishes in its lumen. The sequential addition of sugars to dolichol pyrophosphate produces dolichol-linked oligosaccharides containing fourteen sugars, including two GlcNAcs, nine mannoses and three glucoses. Once assembled, the oligosaccharide is transferred from the lipid to nascent proteins by oligosaccharyltransferases. On the cytoplasmic face of the endoplasmic reticulum, the dimeric ALG13/ALG14 complex catalyzes the second step of dolichol pyrophosphate biosynthesis, transferring a beta1,4-linked N-acetylglucosamine (GlcNAc) from UDP-GlcNAc to GlcNAc-pyrophosphatedolichol (Gn-PDol) to produce N,N'-diacetylchitobiosyl diphosphodolichol. N,N'-diacetylchitobiosyl diphosphodolichol is a substrate for ALG1, the following enzyme in the biosynthetic pathway. Its function is as follows. No glycosyltransferase or deubiquitinase activity is detected for this potential multifunctional enzyme. The sequence is that of UDP-N-acetylglucosamine transferase subunit ALG13 from Mus musculus (Mouse).